The primary structure comprises 372 residues: Glutamate 5-kinase (372 aa).

Residue K14 participates in ATP binding. Substrate is bound by residues S54, D141, and N153. 173 to 174 (TD) lines the ATP pocket. Residues 280–358 (RGTLVLDAGA…EAIESILGYS (79 aa)) form the PUA domain.

Belongs to the glutamate 5-kinase family.

It is found in the cytoplasm. It carries out the reaction L-glutamate + ATP = L-glutamyl 5-phosphate + ADP. It functions in the pathway amino-acid biosynthesis; L-proline biosynthesis; L-glutamate 5-semialdehyde from L-glutamate: step 1/2. Catalyzes the transfer of a phosphate group to glutamate to form L-glutamate 5-phosphate. This Pseudomonas putida (strain ATCC 700007 / DSM 6899 / JCM 31910 / BCRC 17059 / LMG 24140 / F1) protein is Glutamate 5-kinase.